The sequence spans 898 residues: Protein argonaute 1 (898 aa).

Residues 1 to 52 are disordered; the sequence is MLALNAGSQYPGRGRGRGRGDGGNRVHKHDGINRYHGGFRGGRGGGGGGFRD. Residues 18–33 show a composition bias toward basic and acidic residues; the sequence is GRGDGGNRVHKHDGIN. The span at 38–50 shows a compositional bias: gly residues; the sequence is GFRGGRGGGGGGF. Positions 283–378 constitute a PAZ domain; sequence KCSDEMRRLR…IFADRTKMSR (96 aa). The region spanning 542-883 is the Piwi domain; it reads FAMVKLRTKE…YARKYGSLKS (342 aa).

Belongs to the argonaute family.

The protein resides in the cytoplasm. Its function is as follows. Involved in RNA-mediated gene silencing (RNAi) of mobile elements and repeats including retroposons SLACS (Spliced Leader Associated Conserved Sequence), TATE (Telomere-Associated Transposable Element) and TAS-like sequences (Telomere Associated Sequence), and a family of 74-nucleotide long tandem repeats, CIR74. Predominantly binds to siRNAs derived from SLACS and TATE transposable elements and to a lesser extent to siRNAs from TAS-like and CIR74 elements. This chain is Protein argonaute 1, found in Leishmania braziliensis.